Here is a 711-residue protein sequence, read N- to C-terminus: Polyribonucleotide nucleotidyltransferase (711 aa).

Mg(2+) is bound by residues Asp-486 and Asp-492. In terms of domain architecture, KH spans 553-612; the sequence is PRIHTIKINPDKIKDVIGKGGSVIRALTEETGTTIEIEDDGTVKIAATDGEKAKHAIRRI. The S1 motif domain occupies 622–690; the sequence is GRIYNGKVTR…RQGRVRLSIK (69 aa). The disordered stretch occupies residues 690–711; it reads KEATEQSQPAAAPEAPAAEQGE. A compositionally biased stretch (low complexity) spans 694 to 711; sequence EQSQPAAAPEAPAAEQGE.

This sequence belongs to the polyribonucleotide nucleotidyltransferase family. As to quaternary structure, component of the RNA degradosome, which is a multiprotein complex involved in RNA processing and mRNA degradation. Mg(2+) is required as a cofactor.

Its subcellular location is the cytoplasm. The catalysed reaction is RNA(n+1) + phosphate = RNA(n) + a ribonucleoside 5'-diphosphate. Functionally, involved in mRNA degradation. Catalyzes the phosphorolysis of single-stranded polyribonucleotides processively in the 3'- to 5'-direction. The polypeptide is Polyribonucleotide nucleotidyltransferase (Citrobacter koseri (strain ATCC BAA-895 / CDC 4225-83 / SGSC4696)).